Here is a 252-residue protein sequence, read N- to C-terminus: Ubiquinone biosynthesis O-methyltransferase (252 aa).

S-adenosyl-L-methionine is bound by residues Arg-45, Gly-76, Asp-97, and Met-141.

This sequence belongs to the methyltransferase superfamily. UbiG/COQ3 family.

It catalyses the reaction a 3-demethylubiquinol + S-adenosyl-L-methionine = a ubiquinol + S-adenosyl-L-homocysteine + H(+). It carries out the reaction a 3-(all-trans-polyprenyl)benzene-1,2-diol + S-adenosyl-L-methionine = a 2-methoxy-6-(all-trans-polyprenyl)phenol + S-adenosyl-L-homocysteine + H(+). It participates in cofactor biosynthesis; ubiquinone biosynthesis. Its function is as follows. O-methyltransferase that catalyzes the 2 O-methylation steps in the ubiquinone biosynthetic pathway. This chain is Ubiquinone biosynthesis O-methyltransferase, found in Caulobacter vibrioides (strain ATCC 19089 / CIP 103742 / CB 15) (Caulobacter crescentus).